We begin with the raw amino-acid sequence, 73 residues long: Cell division protein ZapB (73 aa).

Positions 3–69 (LELLSKLETK…EKVTGLVGLL (67 aa)) form a coiled coil. The interval 30–50 (EKQKSSTLSEHNQQLNEQNQQ) is disordered. Positions 41–50 (NQQLNEQNQQ) are enriched in low complexity.

This sequence belongs to the ZapB family. As to quaternary structure, homodimer. The ends of the coiled-coil dimer bind to each other, forming polymers. Interacts with FtsZ.

The protein resides in the cytoplasm. Its function is as follows. Non-essential, abundant cell division factor that is required for proper Z-ring formation. It is recruited early to the divisome by direct interaction with FtsZ, stimulating Z-ring assembly and thereby promoting cell division earlier in the cell cycle. Its recruitment to the Z-ring requires functional FtsA or ZipA. This is Cell division protein ZapB from Shewanella putrefaciens (strain CN-32 / ATCC BAA-453).